A 190-amino-acid chain; its full sequence is Translation initiation factor IF-3 (190 aa).

The protein belongs to the IF-3 family. Monomer.

It is found in the cytoplasm. Functionally, IF-3 binds to the 30S ribosomal subunit and shifts the equilibrium between 70S ribosomes and their 50S and 30S subunits in favor of the free subunits, thus enhancing the availability of 30S subunits on which protein synthesis initiation begins. In Prochlorococcus marinus (strain MIT 9301), this protein is Translation initiation factor IF-3.